The sequence spans 368 residues: Phosphate acyltransferase (368 aa).

Belongs to the PlsX family. As to quaternary structure, homodimer. Probably interacts with PlsY.

The protein resides in the cytoplasm. The enzyme catalyses a fatty acyl-[ACP] + phosphate = an acyl phosphate + holo-[ACP]. Its pathway is lipid metabolism; phospholipid metabolism. Catalyzes the reversible formation of acyl-phosphate (acyl-PO(4)) from acyl-[acyl-carrier-protein] (acyl-ACP). This enzyme utilizes acyl-ACP as fatty acyl donor, but not acyl-CoA. The chain is Phosphate acyltransferase from Granulibacter bethesdensis (strain ATCC BAA-1260 / CGDNIH1).